We begin with the raw amino-acid sequence, 176 residues long: Small ribosomal subunit protein uS5 (176 aa).

The S5 DRBM domain maps to 15–78 (FEERIVEIRR…SAARRNVFEV (64 aa)).

It belongs to the universal ribosomal protein uS5 family. In terms of assembly, part of the 30S ribosomal subunit. Contacts proteins S4 and S8.

Its function is as follows. With S4 and S12 plays an important role in translational accuracy. Located at the back of the 30S subunit body where it stabilizes the conformation of the head with respect to the body. The chain is Small ribosomal subunit protein uS5 from Thermosipho africanus (strain TCF52B).